The sequence spans 158 residues: Adenosine 5'-monophosphoramidase HNT1 (158 aa).

Residues 26 to 129 (IFCKIIKSEI…IPKRDEKSGL (104 aa)) form the HIT domain. AMP is bound by residues 51-52 (DI), Asn103, 109-111 (HQE), and 116-118 (HFH). Positions 114 to 118 (HVHFH) match the Histidine triad motif motif. Residue His116 is the Tele-AMP-histidine intermediate of the active site.

Belongs to the HINT family. Homodimer. Interacts with KIN28. Mg(2+) is required as a cofactor.

The catalysed reaction is adenosine 5'-phosphoramidate + H2O = AMP + NH4(+). In terms of biological role, hydrolyzes adenosine 5'-monophosphoramidate substrates such as AMP-morpholidate, AMP-N-alanine methyl ester, AMP-alpha-acetyl lysine methyl ester and AMP-NH2. Plays a role in the regulation of kinase KIN28 function. Essential for growth on galactose media at elevated temperatures. The protein is Adenosine 5'-monophosphoramidase HNT1 of Saccharomyces cerevisiae (strain ATCC 204508 / S288c) (Baker's yeast).